We begin with the raw amino-acid sequence, 237 residues long: 2-C-methyl-D-erythritol 4-phosphate cytidylyltransferase (237 aa).

This sequence belongs to the IspD/TarI cytidylyltransferase family. IspD subfamily.

The enzyme catalyses 2-C-methyl-D-erythritol 4-phosphate + CTP + H(+) = 4-CDP-2-C-methyl-D-erythritol + diphosphate. Its pathway is isoprenoid biosynthesis; isopentenyl diphosphate biosynthesis via DXP pathway; isopentenyl diphosphate from 1-deoxy-D-xylulose 5-phosphate: step 2/6. Catalyzes the formation of 4-diphosphocytidyl-2-C-methyl-D-erythritol from CTP and 2-C-methyl-D-erythritol 4-phosphate (MEP). The protein is 2-C-methyl-D-erythritol 4-phosphate cytidylyltransferase of Vibrio vulnificus (strain YJ016).